Consider the following 131-residue polypeptide: Transcription antitermination protein NusB (131 aa).

Belongs to the NusB family.

Its function is as follows. Involved in transcription antitermination. Required for transcription of ribosomal RNA (rRNA) genes. Binds specifically to the boxA antiterminator sequence of the ribosomal RNA (rrn) operons. This is Transcription antitermination protein NusB from Campylobacter concisus (strain 13826).